A 185-amino-acid chain; its full sequence is Mitochondrial inner membrane protease atp23 (185 aa).

His-86 serves as a coordination point for a divalent metal cation. The active site involves Glu-87. His-90 is an a divalent metal cation binding site.

This sequence belongs to the peptidase M76 family.

It localises to the mitochondrion inner membrane. Functionally, has a dual role in the assembly of mitochondrial ATPase. Acts as a protease that removes N-terminal residues of mitochondrial ATPase CF(0) subunit 6 at the intermembrane space side. Also involved in the correct assembly of the membrane-embedded ATPase CF(0) particle, probably mediating association of subunit 6 with the subunit 9 ring. The polypeptide is Mitochondrial inner membrane protease atp23 (atp23) (Schizosaccharomyces pombe (strain 972 / ATCC 24843) (Fission yeast)).